The primary structure comprises 247 residues: Coproheme decarboxylase (247 aa).

Fe-coproporphyrin III-binding positions include R129, 143-147, H170, Q183, and S221; that span reads YPMDK. Y143 is an active-site residue.

This sequence belongs to the ChdC family. Type 1 subfamily. The cofactor is Fe-coproporphyrin III.

The enzyme catalyses Fe-coproporphyrin III + 2 H2O2 + 2 H(+) = heme b + 2 CO2 + 4 H2O. It catalyses the reaction Fe-coproporphyrin III + H2O2 + H(+) = harderoheme III + CO2 + 2 H2O. The catalysed reaction is harderoheme III + H2O2 + H(+) = heme b + CO2 + 2 H2O. It participates in porphyrin-containing compound metabolism; protoheme biosynthesis. In terms of biological role, involved in coproporphyrin-dependent heme b biosynthesis. Catalyzes the decarboxylation of Fe-coproporphyrin III (coproheme) to heme b (protoheme IX), the last step of the pathway. The reaction occurs in a stepwise manner with a three-propionate intermediate. This is Coproheme decarboxylase from Bacillus cereus (strain B4264).